Reading from the N-terminus, the 159-residue chain is uncharacterized protein (159 aa).

Disordered stretches follow at residues 1 to 29 and 114 to 159; these read MHQT…TSES and TRGG…NENT. A compositionally biased stretch (polar residues) spans 15–29; sequence SFSNESPTSRETSES.

This is an uncharacterized protein from Homo sapiens (Human).